A 139-amino-acid chain; its full sequence is Large-conductance mechanosensitive channel (139 aa).

2 consecutive transmembrane segments (helical) span residues 9–29 (AFAVKGNVVDMAVGIIIGAAF) and 79–99 (IQTVIDFVIVAFAIFMGVKAI).

This sequence belongs to the MscL family. In terms of assembly, homopentamer.

The protein localises to the cell inner membrane. Functionally, channel that opens in response to stretch forces in the membrane lipid bilayer. May participate in the regulation of osmotic pressure changes within the cell. This is Large-conductance mechanosensitive channel from Pseudomonas putida (strain ATCC 700007 / DSM 6899 / JCM 31910 / BCRC 17059 / LMG 24140 / F1).